Consider the following 160-residue polypeptide: METQRASLSLGRCSLWLLLLGLALPSASAQVLSYREAVLRAADQLNEKSSEANLYRLLELDPPPKQDDENSNIPKPVSFRVKETVCPRTSQQPAEQCDFKENGLLKECVGTVTLDQVRNNFDITCAEPQSVRGLRRLGRKIAHGVKKYGPTVLRIIRIAG.

The N-terminal stretch at 1 to 29 (METQRASLSLGRCSLWLLLLGLALPSASA) is a signal peptide. Residues 30–131 (QVLSYREAVL…DITCAEPQSV (102 aa)) constitute a propeptide that is removed on maturation. 2 cysteine pairs are disulfide-bonded: C86–C97 and C108–C125.

It belongs to the cathelicidin family.

It localises to the secreted. Functionally, broad spectrum bactericidal agent. This is Cathelin-related peptide SC5 from Ovis aries (Sheep).